The chain runs to 384 residues: N-acetylneuraminate epimerase (384 aa).

Positions 1-29 (MGMQMKNFKKMMTLMALCLSVAITTSGYA) are cleaved as a signal peptide. Kelch repeat units follow at residues 51–95 (VIYV…VFLN), 97–149 (KLYV…VKLN), 151–184 (TMVLITGGVNEHIFDKYFIDIAAADESEKNKVIY), 185–230 (NYFN…VMEN), 233–282 (LMLI…LAGA), 304–353 (QNYT…SYGD), and 355–384 (VFLIGGENAKGKPVSSVTSFTMRDGNLLIK). The Proton acceptor role is filled by Glu-239.

Belongs to the NanM family. Homodimer.

It localises to the periplasm. It catalyses the reaction N-acetyl-alpha-neuraminate = N-acetyl-beta-neuraminate. Its function is as follows. Converts alpha-N-acetylneuranimic acid (Neu5Ac) to the beta-anomer, accelerating the equilibrium between the alpha- and beta-anomers. Probably facilitates sialidase-negative bacteria to compete successfully for limited amounts of extracellular Neu5Ac, which is likely taken up in the beta-anomer. In addition, the rapid removal of sialic acid from solution might be advantageous to the bacterium to damp down host responses. This chain is N-acetylneuraminate epimerase, found in Salmonella typhi.